A 136-amino-acid polypeptide reads, in one-letter code: Nucleoside diphosphate kinase (136 aa).

6 residues coordinate ATP: Lys-10, Phe-58, Arg-86, Thr-92, Arg-104, and Asn-114. The active-site Pros-phosphohistidine intermediate is the His-117.

Belongs to the NDK family. As to quaternary structure, homotetramer. Mg(2+) serves as cofactor.

The protein localises to the cytoplasm. The catalysed reaction is a 2'-deoxyribonucleoside 5'-diphosphate + ATP = a 2'-deoxyribonucleoside 5'-triphosphate + ADP. The enzyme catalyses a ribonucleoside 5'-diphosphate + ATP = a ribonucleoside 5'-triphosphate + ADP. In terms of biological role, major role in the synthesis of nucleoside triphosphates other than ATP. The ATP gamma phosphate is transferred to the NDP beta phosphate via a ping-pong mechanism, using a phosphorylated active-site intermediate. The chain is Nucleoside diphosphate kinase from Mycobacterium ulcerans (strain Agy99).